We begin with the raw amino-acid sequence, 296 residues long: Bidirectional sugar transporter SWEET13 (296 aa).

Topologically, residues 1–9 are extracellular; the sequence is MAGLSLQHP. Residues 10-30 form a helical membrane-spanning segment; it reads WAFAFGLLGNLISFTTYLAPI. The region spanning 13–98 is the MtN3/slv 1 domain; it reads AFGLLGNLIS…VMYLAYAPKK (86 aa). The Cytoplasmic portion of the chain corresponds to 31–45; it reads PTFYRIYKSKSTEGF. The chain crosses the membrane as a helical span at residues 46–66; the sequence is QSVPYVVALFSAMLWIFYALI. Over 67–71 the chain is Extracellular; the sequence is KSNEA. Residues 72 to 92 traverse the membrane as a helical segment; the sequence is LLITINAAGCVIETIYIVMYL. Residues 93-105 are Cytoplasmic-facing; the sequence is AYAPKKAKVFTTK. The chain crosses the membrane as a helical span at residues 106–126; the sequence is ILLLLNVGVFGVILLLTLLLS. Residues 127 to 133 lie on the Extracellular side of the membrane; it reads HGEQRVV. Residues 134–154 form a helical membrane-spanning segment; it reads SLGWVCVAFSVSVFVAPLSII. Residues 134–217 form the MtN3/slv 2 domain; that stretch reads SLGWVCVAFS…MGLYVFYMNA (84 aa). The Cytoplasmic portion of the chain corresponds to 155-167; that stretch reads KRVIQSRSVEYMP. The helical transmembrane segment at 168 to 188 threads the bilayer; it reads FSLSLTLTLSAVVWFLYGLLI. Over 189–192 the chain is Extracellular; it reads KDKY. The helical transmembrane segment at 193–213 threads the bilayer; it reads VALPNILGFTFGVVQMGLYVF. The Cytoplasmic portion of the chain corresponds to 214–296; it reads YMNATPVAGE…PPRAVEVAAV (83 aa).

This sequence belongs to the SWEET sugar transporter family. In terms of assembly, forms homooligomers and/or heterooligomers.

It is found in the cell membrane. Its function is as follows. Mediates both low-affinity uptake and efflux of sugar across the plasma membrane. Functionally, confers blight susceptibility. Confers TAL effector-mediated susceptibility to Xanthomonas oryzae pv. oryzae. This is Bidirectional sugar transporter SWEET13 (SWEET13) from Oryza sativa subsp. japonica (Rice).